A 321-amino-acid polypeptide reads, in one-letter code: Glucokinase (321 aa).

Residue 8–13 (GDVGGT) participates in ATP binding.

The protein belongs to the bacterial glucokinase family.

The protein resides in the cytoplasm. The enzyme catalyses D-glucose + ATP = D-glucose 6-phosphate + ADP + H(+). The sequence is that of Glucokinase from Pectobacterium atrosepticum (strain SCRI 1043 / ATCC BAA-672) (Erwinia carotovora subsp. atroseptica).